The sequence spans 194 residues: Isopentenyl-diphosphate Delta-isomerase (194 aa).

Residues His27 and His34 each coordinate Mn(2+). The region spanning 32–166 (ALHLAFSCHV…PWAFSPWLTL (135 aa)) is the Nudix hydrolase domain. Residue Cys69 is part of the active site. His71 contributes to the Mn(2+) binding site. Position 89 (Glu89) interacts with Mg(2+). Mn(2+)-binding residues include Glu116 and Glu118. Glu118 is a catalytic residue.

The protein belongs to the IPP isomerase type 1 family. The cofactor is Mg(2+). It depends on Mn(2+) as a cofactor.

The protein localises to the cytoplasm. It catalyses the reaction isopentenyl diphosphate = dimethylallyl diphosphate. It functions in the pathway isoprenoid biosynthesis; dimethylallyl diphosphate biosynthesis; dimethylallyl diphosphate from isopentenyl diphosphate: step 1/1. Functionally, catalyzes the 1,3-allylic rearrangement of the homoallylic substrate isopentenyl (IPP) to its highly electrophilic allylic isomer, dimethylallyl diphosphate (DMAPP). The chain is Isopentenyl-diphosphate Delta-isomerase from Clavibacter michiganensis subsp. michiganensis (strain NCPPB 382).